A 453-amino-acid chain; its full sequence is Midnolin (453 aa).

One can recognise a Ubiquitin-like domain in the interval 20–94 (MNLNIQSTTG…LTLLPSVEAG (75 aa)). 4 disordered regions span residues 185-219 (HLASCTPGSTPPTTLSPTASTHRDGPHSSPLTTSV), 231-256 (PCAEQVPCSSRGTEGTSSSASSRSRK), 330-374 (SQAR…QTEN), and 390-434 (QKRL…IDFE). 2 stretches are compositionally biased toward low complexity: residues 188-204 (SCTPGSTPPTTLSPTAS) and 239-252 (SSRGTEGTSSSASS). Positions 330–362 (SQARNPKATSPQSSEPQQTTHPVGHCQAQTRTC) are enriched in polar residues. Residues 365-374 (SGDRLRQTEN) are compositionally biased toward basic and acidic residues. Over residues 390 to 399 (QKRLRRKARR) the composition is skewed to basic residues. The segment covering 415 to 428 (RTSSNSSTSSGEGS) has biased composition (low complexity).

The protein localises to the nucleus. It localises to the cytoplasm. The protein resides in the cytosol. Its subcellular location is the nucleolus. Its function is as follows. Facilitates ubiquitin-independent proteasomal degradation of polycomb protein CBX4. Plays a role in inhibiting the activity of glucokinase GCK and both glucose-induced and basal insulin secretion. The chain is Midnolin (midn) from Xenopus tropicalis (Western clawed frog).